Consider the following 379-residue polypeptide: Queuine tRNA-ribosyltransferase (379 aa).

D94 serves as the catalytic Proton acceptor. Substrate contacts are provided by residues 94–98 (DSGGF), D148, Q191, and G218. The RNA binding stretch occupies residues 249-255 (GVGSPDA). D268 (nucleophile) is an active-site residue. Residues 273–277 (TRIAR) form an RNA binding; important for wobble base 34 recognition region. Positions 306, 308, 311, and 337 each coordinate Zn(2+).

The protein belongs to the queuine tRNA-ribosyltransferase family. In terms of assembly, homodimer. Within each dimer, one monomer is responsible for RNA recognition and catalysis, while the other monomer binds to the replacement base PreQ1. The cofactor is Zn(2+).

It carries out the reaction 7-aminomethyl-7-carbaguanine + guanosine(34) in tRNA = 7-aminomethyl-7-carbaguanosine(34) in tRNA + guanine. It functions in the pathway tRNA modification; tRNA-queuosine biosynthesis. Functionally, catalyzes the base-exchange of a guanine (G) residue with the queuine precursor 7-aminomethyl-7-deazaguanine (PreQ1) at position 34 (anticodon wobble position) in tRNAs with GU(N) anticodons (tRNA-Asp, -Asn, -His and -Tyr). Catalysis occurs through a double-displacement mechanism. The nucleophile active site attacks the C1' of nucleotide 34 to detach the guanine base from the RNA, forming a covalent enzyme-RNA intermediate. The proton acceptor active site deprotonates the incoming PreQ1, allowing a nucleophilic attack on the C1' of the ribose to form the product. After dissociation, two additional enzymatic reactions on the tRNA convert PreQ1 to queuine (Q), resulting in the hypermodified nucleoside queuosine (7-(((4,5-cis-dihydroxy-2-cyclopenten-1-yl)amino)methyl)-7-deazaguanosine). This Staphylococcus aureus (strain Mu3 / ATCC 700698) protein is Queuine tRNA-ribosyltransferase.